We begin with the raw amino-acid sequence, 407 residues long: E3 ubiquitin-protein ligase TRIM13 (407 aa).

An RING-type zinc finger spans residues 10–58; sequence CPICCSLFDDPRVLPCSHNFCKKCLEGLLEGNVRNSLWRPSPFKCPTCR. The B box-type zinc finger occupies 89–131; the sequence is PKMPVCKEHLGQPLNIFCVTDMQLICGVCATRGSHTKHVFSSI. Zn(2+) is bound by residues cysteine 94, histidine 97, cysteine 117, and histidine 123. The stretch at 172-200 forms a coiled coil; the sequence is LQLLTKDSDKVKEFFEKLQHTLDQKKNEI. A helical membrane pass occupies residues 316–336; that stretch reads LLLMAVVLLGLLVFFGPTVFL.

Interacts (via C-terminal domain) with VCP. Interacts with AKT1; the interaction ubiquitinates AKT1 and leads to its proteasomal degradation. Interacts with MDM2; the interaction ubiquitinates AKT1 and leads to its proteasomal degradation. Interacts with p62/SQSTM1. Interacts with TRAF6. Interacts with IKBKG/NEMO. Auto-ubiquitinated; requires the RING-type zinc finger. Auto-polyubiquitination leads to proteasomal degradation.

It is found in the endoplasmic reticulum membrane. The enzyme catalyses S-ubiquitinyl-[E2 ubiquitin-conjugating enzyme]-L-cysteine + [acceptor protein]-L-lysine = [E2 ubiquitin-conjugating enzyme]-L-cysteine + N(6)-ubiquitinyl-[acceptor protein]-L-lysine.. It participates in protein modification; protein ubiquitination. Functionally, endoplasmic reticulum (ER) membrane anchored E3 ligase involved in the retrotranslocation and turnover of membrane and secretory proteins from the ER through a set of processes named ER-associated degradation (ERAD). This process acts on misfolded proteins as well as in the regulated degradation of correctly folded proteins. Enhances ionizing radiation-induced p53/TP53 stability and apoptosis via ubiquitinating MDM2 and AKT1 and decreasing AKT1 kinase activity through MDM2 and AKT1 proteasomal degradation. Regulates ER stress-induced autophagy, and may act as a tumor suppressor. Also plays a role in innate immune response by stimulating NF-kappa-B activity in the TLR2 signaling pathway. Ubiquitinates TRAF6 via the 'Lys-29'-linked polyubiquitination chain resulting in NF-kappa-B activation. Participates as well in T-cell receptor-mediated NF-kappa-B activation. In the presence of TNF, modulates the IKK complex by regulating IKBKG/NEMO ubiquitination leading to the repression of NF-kappa-B. The polypeptide is E3 ubiquitin-protein ligase TRIM13 (Trim13) (Rattus norvegicus (Rat)).